Here is a 351-residue protein sequence, read N- to C-terminus: Holliday junction branch migration complex subunit RuvB (351 aa).

Positions 4-199 are large ATPase domain (RuvB-L); sequence DNPQFNQWYE…FGIINSLQYY (196 aa). Residues Leu-38, Arg-39, Gly-80, Lys-83, Thr-84, Thr-85, 146–148, Arg-189, Tyr-199, and Arg-236 contribute to the ATP site; that span reads EDY. Thr-84 is a binding site for Mg(2+). The interval 200-270 is small ATPAse domain (RuvB-S); it reads TPEELQQIVV…IVTIGLDKLR (71 aa). Residues 273–351 form a head domain (RuvB-H) region; it reads NRGLDETDHK…HLGHAYQRKL (79 aa). 2 residues coordinate DNA: Arg-328 and Arg-333.

Belongs to the RuvB family. In terms of assembly, homohexamer. Forms an RuvA(8)-RuvB(12)-Holliday junction (HJ) complex. HJ DNA is sandwiched between 2 RuvA tetramers; dsDNA enters through RuvA and exits via RuvB. An RuvB hexamer assembles on each DNA strand where it exits the tetramer. Each RuvB hexamer is contacted by two RuvA subunits (via domain III) on 2 adjacent RuvB subunits; this complex drives branch migration. In the full resolvosome a probable DNA-RuvA(4)-RuvB(12)-RuvC(2) complex forms which resolves the HJ.

The protein localises to the cytoplasm. The catalysed reaction is ATP + H2O = ADP + phosphate + H(+). In terms of biological role, the RuvA-RuvB-RuvC complex processes Holliday junction (HJ) DNA during genetic recombination and DNA repair, while the RuvA-RuvB complex plays an important role in the rescue of blocked DNA replication forks via replication fork reversal (RFR). RuvA specifically binds to HJ cruciform DNA, conferring on it an open structure. The RuvB hexamer acts as an ATP-dependent pump, pulling dsDNA into and through the RuvAB complex. RuvB forms 2 homohexamers on either side of HJ DNA bound by 1 or 2 RuvA tetramers; 4 subunits per hexamer contact DNA at a time. Coordinated motions by a converter formed by DNA-disengaged RuvB subunits stimulates ATP hydrolysis and nucleotide exchange. Immobilization of the converter enables RuvB to convert the ATP-contained energy into a lever motion, pulling 2 nucleotides of DNA out of the RuvA tetramer per ATP hydrolyzed, thus driving DNA branch migration. The RuvB motors rotate together with the DNA substrate, which together with the progressing nucleotide cycle form the mechanistic basis for DNA recombination by continuous HJ branch migration. Branch migration allows RuvC to scan DNA until it finds its consensus sequence, where it cleaves and resolves cruciform DNA. The polypeptide is Holliday junction branch migration complex subunit RuvB (Leuconostoc mesenteroides subsp. mesenteroides (strain ATCC 8293 / DSM 20343 / BCRC 11652 / CCM 1803 / JCM 6124 / NCDO 523 / NBRC 100496 / NCIMB 8023 / NCTC 12954 / NRRL B-1118 / 37Y)).